The primary structure comprises 168 residues: MMKLKSNQTRTYDGDGYKKRAACLCFRSESEEEVLLVSSSRHPDRWIVPGGGMEPEEEPSVAAVREVCEEAGVKGTLGRLVGIFENQERKHRTYVYVLIVTEVLEDWEDSVNIGRKREWFKIEDAIKVLQCHKPVQASYFETLRQGYPANNGTPVVPTTYSSSVSGIR.

Residue Met1 is modified to N-acetylmethionine. Substrate-binding positions include Arg10, Lys18–Arg20, and Ser39–Arg41. The Nudix hydrolase domain maps to Tyr17–Arg144. Positions 50 and 66 each coordinate Mg(2+). A Nudix box motif is present at residues Gly51 to Gly72. The active-site Proton acceptor is Glu69. Position 70 (Glu70) interacts with Mg(2+). Residues Arg89–His91, Arg115, and Lys133 contribute to the substrate site.

It belongs to the Nudix hydrolase family. DIPP subfamily. As to quaternary structure, monomer. Requires Mg(2+) as cofactor. Mn(2+) is required as a cofactor. The cofactor is Zn(2+). As to expression, present in heart, lung, liver and spleen (at protein level). Widely expressed.

It is found in the cytoplasm. It localises to the nucleus. The enzyme catalyses diphospho-myo-inositol polyphosphate + H2O = myo-inositol polyphosphate + phosphate.. It carries out the reaction 5-diphospho-1D-myo-inositol 1,2,3,4,6-pentakisphosphate + H2O = 1D-myo-inositol hexakisphosphate + phosphate + H(+). The catalysed reaction is 3,5-bis(diphospho)-1D-myo-inositol 1,2,4,6-tetrakisphosphate + H2O = 3-diphospho-1D-myo-inositol 1,2,4,5,6-pentakisphosphate + phosphate + 2 H(+). It catalyses the reaction [phosphate](n+1) + n H2O = (n+1) phosphate + n H(+). The enzyme catalyses P(1),P(5)-bis(5'-adenosyl) pentaphosphate + H2O = ADP + ATP + 2 H(+). It carries out the reaction P(1),P(6)-bis(5'-adenosyl) hexaphosphate + H2O = 2 ATP + 2 H(+). The catalysed reaction is P(1),P(4)-bis(5'-adenosyl) tetraphosphate + H2O = AMP + ATP + 2 H(+). It catalyses the reaction a 5'-end (N(7)-methyl 5'-triphosphoguanosine)-ribonucleoside in mRNA + H2O = N(7)-methyl-GMP + a 5'-end diphospho-ribonucleoside in mRNA + 2 H(+). The enzyme catalyses a 5'-end (N(7)-methyl 5'-triphosphoguanosine)-ribonucleoside in mRNA + H2O = N(7)-methyl-GDP + a 5'-end phospho-ribonucleoside in mRNA + 2 H(+). Functionally, cleaves a beta-phosphate from the diphosphate groups in PP-InsP5 (diphosphoinositol pentakisphosphate) and [PP]2-InsP4 (bisdiphosphoinositol tetrakisphosphate), suggesting that it may play a role in signal transduction. InsP6 (inositol hexakisphosphate) is not a substrate. Also able to catalyze the hydrolysis of dinucleoside oligophosphates, with diadenosine 5',5'''-P1,P6-hexaphosphate (Ap6A) and diadenosine 5',5'''- P1,P5-pentaphosphate (Ap5A) being the preferred substrates. The major reaction products are ADP and p4a from Ap6A and ADP and ATP from Ap5A. Also able to hydrolyze 5- phosphoribose 1-diphosphate. Acts as a negative regulator of the ERK1/2 pathway. Acts as a decapping enzyme that can hydrolyze both monomethylated and unmethylated capped RNAs. Hydrolyzes monomethylated capped RNA after both the alpha- and beta-phosphates generating m7GMP + ppRNA and m7GDP + pRNA. Modulates the stability of a subset of mRNAs implicated in cell motility. Divalent cations zinc, magnesium and manganese determine its substrate specificity. Exhibits diphosphoinositol polyphosphate phosphohydrolase in the presence of magnesium ions, diadenosine hexaphosphate hydrolase activity in the presence of manganese ions and endopolyphosphatase activity in the presence of zinc ions. Plays an important role in limiting DNA damage and maintaining cell survival upon oxidative stress via its endopolyphosphatase activity. This chain is Diphosphoinositol polyphosphate phosphohydrolase 1, found in Mus musculus (Mouse).